The primary structure comprises 163 residues: Disulfide bond formation protein B 1 (163 aa).

Residues 1 to 9 (MPLASPRQL) are Cytoplasmic-facing. The chain crosses the membrane as a helical span at residues 10 to 26 (FLLAFLACVAIMGGALY). The Periplasmic portion of the chain corresponds to 27-44 (LEHVVGLEACPLCVVQRI). The cysteines at positions 36 and 39 are disulfide-linked. A helical membrane pass occupies residues 45-61 (FFILIGLTCLAGAIQGP). Residues 62–67 (GLRGRR) are Cytoplasmic-facing. Residues 68–85 (IYSVLVFLLALGGGATAA) traverse the membrane as a helical segment. Over 86 to 142 (RQVWLQTVPLDQLPACLPSLDYMMQALPFQEVIRLVLHGTADCAQVSWTLFTLSIPE) the chain is Periplasmic. Cys-101 and Cys-128 are disulfide-bonded. The chain crosses the membrane as a helical span at residues 143 to 161 (WSLLAFVAYLGFSIVQFLR). The Cytoplasmic portion of the chain corresponds to 162–163 (RA).

This sequence belongs to the DsbB family.

It is found in the cell inner membrane. Required for disulfide bond formation in some periplasmic proteins. Acts by oxidizing the DsbA protein. The chain is Disulfide bond formation protein B 1 (dsbB1) from Pseudomonas aeruginosa (strain ATCC 15692 / DSM 22644 / CIP 104116 / JCM 14847 / LMG 12228 / 1C / PRS 101 / PAO1).